Consider the following 133-residue polypeptide: Large ribosomal subunit protein bL20 (133 aa).

This sequence belongs to the bacterial ribosomal protein bL20 family.

Binds directly to 23S ribosomal RNA and is necessary for the in vitro assembly process of the 50S ribosomal subunit. It is not involved in the protein synthesizing functions of that subunit. This chain is Large ribosomal subunit protein bL20, found in Mesorhizobium japonicum (strain LMG 29417 / CECT 9101 / MAFF 303099) (Mesorhizobium loti (strain MAFF 303099)).